The chain runs to 472 residues: Eukaryotic translation initiation factor 2 subunit 3, Y-linked (472 aa).

Residue Ala-2 is modified to N-acetylalanine. The residue at position 16 (Ser-16) is a Phosphoserine. The tr-type G domain maps to 39 to 247 (QATINIGTIG…YIVKKIPVPL (209 aa)). The tract at residues 48–55 (GHVAHGKS) is G1. 51-56 (AHGKST) is a GTP binding site. Residues 76 to 80 (NITIK) form a G2 region. Positions 134–137 (DCPG) are G3. GTP is bound by residues 190-193 (NKID) and 225-227 (SAQ). The G4 stretch occupies residues 190–193 (NKID). The interval 225–227 (SAQ) is G5.

It belongs to the TRAFAC class translation factor GTPase superfamily. Classic translation factor GTPase family. EIF2G subfamily. In terms of assembly, eIF2 is a heterotrimer composed of an alpha (EIF2S1), a beta (EIF2S2) and a gamma (Eif2s3x and Eif2s3y) chain. eIF2 is member of the 43S pre-initiation complex (43S PIC). As to expression, widely expressed in males.

The enzyme catalyses GTP + H2O = GDP + phosphate + H(+). Functionally, member of the eIF2 complex that functions in the early steps of protein synthesis by forming a ternary complex with GTP and initiator tRNA. This complex binds to a 40S ribosomal subunit, followed by mRNA binding to form the 43S pre-initiation complex (43S PIC). Junction of the 60S ribosomal subunit to form the 80S initiation complex is preceded by hydrolysis of the GTP bound to eIF2 and release of an eIF2-GDP binary complex. In order for eIF2 to recycle and catalyze another round of initiation, the GDP bound to eIF2 must exchange with GTP by way of a reaction catalyzed by eIF-2B. Along with its paralog on chromosome X, may contribute to spermatogenesis up to the round spermatid stage. The sequence is that of Eukaryotic translation initiation factor 2 subunit 3, Y-linked (Eif2s3y) from Rattus norvegicus (Rat).